Reading from the N-terminus, the 336-residue chain is DNA-directed RNA polymerase subunit alpha (336 aa).

Residues 1–232 (MIQKNWQELI…DQLGVFVNFD (232 aa)) are alpha N-terminal domain (alpha-NTD). The segment at 248–336 (FNPALLKKVD…DLAKRYEDQY (89 aa)) is alpha C-terminal domain (alpha-CTD).

Belongs to the RNA polymerase alpha chain family. In terms of assembly, homodimer. The RNAP catalytic core consists of 2 alpha, 1 beta, 1 beta' and 1 omega subunit. When a sigma factor is associated with the core the holoenzyme is formed, which can initiate transcription.

The enzyme catalyses RNA(n) + a ribonucleoside 5'-triphosphate = RNA(n+1) + diphosphate. DNA-dependent RNA polymerase catalyzes the transcription of DNA into RNA using the four ribonucleoside triphosphates as substrates. In Rhizobium rhizogenes (strain K84 / ATCC BAA-868) (Agrobacterium radiobacter), this protein is DNA-directed RNA polymerase subunit alpha.